The chain runs to 262 residues: Cerebellar degeneration-related antigen 1 (262 aa).

Tandem repeats lie at residues 3–8 (WLEDVD), 9–14 (FLEDVP), 15–20 (LLEDIP), 21–26 (LLEDVP), 27–32 (LLEDVP), 33–38 (LLEDTS), 39–44 (RLEDIN), 45–50 (LMEDMA), 51–56 (LLEDVD), 57–62 (LLEDTD), 63–68 (FLEDLD), 69–74 (FSEAMD), 75–80 (LREDKD), 81–86 (FLEDMD), 87–92 (SLEDMA), 93–98 (LLEDVD), 99–104 (LLEDTD), 105–110 (FLEDPD), 111–116 (FLEAID), 117–122 (LREDKD), 123–128 (FLEDMD), 129–134 (SLEDLE), 135–140 (AIGRCG), 141–146 (FSGRHG), 147–152 (FFGRRR), 153–158 (FSGRPK), 159–164 (LSGRLG), 165–170 (LLGRRG), 171–176 (FSGRLG), 177–182 (GYWKTW), 183–188 (IFWKTW), 189–194 (IFWKTW), 195–200 (IFRKTY), and 201–206 (IGWKTW). A 23 X 6 AA approximate repeats region spans residues 3-140 (WLEDVDFLED…EDLEAIGRCG (138 aa)). The tract at residues 141 to 176 (FSGRHGFFGRRRFSGRPKLSGRLGLLGRRGFSGRLG) is 6 X 6 AA approximate repeats. The 5 X 6 AA approximate repeats stretch occupies residues 177 to 206 (GYWKTWIFWKTWIFWKTWIFRKTYIGWKTW).

As to expression, brain; predominantly expressed in normal neuroectodermal tissues and in certain malignant tumors.

The chain is Cerebellar degeneration-related antigen 1 (CDR1) from Homo sapiens (Human).